We begin with the raw amino-acid sequence, 415 residues long: ATP-dependent RNA helicase RhlB (415 aa).

The short motif at 9-37 is the Q motif element; the sequence is QRFSALPLHPIVRGALAKKGFDFCTPIQA. The 179-residue stretch at 40–218 folds into the Helicase ATP-binding domain; that stretch reads LPISLNGRDV…FEDMNDPEYI (179 aa). 53-60 contributes to the ATP binding site; it reads AQTGTGKT. The DEAD box signature appears at 164 to 167; sequence DEAD. The Helicase C-terminal domain occupies 241–389; sequence DKMALLLTLM…VSQYETEALL (149 aa).

It belongs to the DEAD box helicase family. RhlB subfamily. As to quaternary structure, component of the RNA degradosome, which is a multiprotein complex involved in RNA processing and mRNA degradation.

It localises to the cytoplasm. The enzyme catalyses ATP + H2O = ADP + phosphate + H(+). Its function is as follows. DEAD-box RNA helicase involved in RNA degradation. Has RNA-dependent ATPase activity and unwinds double-stranded RNA. In Haemophilus influenzae (strain PittGG), this protein is ATP-dependent RNA helicase RhlB.